The sequence spans 245 residues: Anti-Pycsar protein Apyc1 (245 aa).

Positions 19–219 (FNNNALLYAG…EIQSQILLKH (201 aa)) are beta-lactamase-like. Zn(2+) contacts are provided by histidine 61, histidine 63, aspartate 65, histidine 66, histidine 145, aspartate 165, and histidine 219.

This sequence belongs to the anti-Pycsar protein Apyc1 family. Homodimer. It depends on Zn(2+) as a cofactor.

The catalysed reaction is 3',5'-cyclic CMP + H2O = CMP + H(+). The enzyme catalyses 3',5'-cyclic UMP + H2O = UMP + H(+). Functionally, counteracts the endogenous Pycsar antiviral defense system. Phosphodiesterase that enables metal-dependent hydrolysis of host cyclic nucleotide Pycsar defense signals such as cCMP and cUMP. In Paenibacillus sp. (strain J14), this protein is Anti-Pycsar protein Apyc1.